Here is a 431-residue protein sequence, read N- to C-terminus: REST corepressor 1 (431 aa).

Residues 1–10 show a composition bias toward basic and acidic residues; sequence MIEKGAEISG. Positions 1–53 are disordered; sequence MIEKGAEISGKRRGRNNAANSKSLGTNVNGSNSWEEGSSSSSSDDEPGGGGMR. Residues 17–28 are compositionally biased toward polar residues; that stretch reads NAANSKSLGTNV. Residues 29–42 show a composition bias toward low complexity; the sequence is NGSNSWEEGSSSSS. An ELM2 domain is found at 50–135; that stretch reads GGMRVGLQYQ…KSLADLLNFT (86 aa). In terms of domain architecture, SANT 1 spans 136-187; sequence PFPDEWTVEDRVLFEQAFSFHGKTFHRIQQMLPDKSIASLVKFYYSWKKTRS. The segment at 190 to 262 is disordered; that stretch reads SVMDRHARKQ…NRAKRKPPNG (73 aa). Over residues 224–242 the composition is skewed to basic and acidic residues; the sequence is EQPKEAKKEVPKNDTVPHI. Positions 267–314 form a coiled coil; it reads QEDVEAVSANANAATTVLRQLDMELVSIKRQIQNIKQTNSAFKEKLQG. One can recognise an SANT 2 domain in the interval 327–378; the sequence is KFNARWTTEEQLLAVQAIRMYGRDFQAISDVIGNKSVVQVKNFFVNYRRRFN.

It belongs to the CoREST family. As to quaternary structure, component of a BHC histone deacetylase complex that contains KDM1A. In terms of tissue distribution, expressed in territories in which neurogenesis takes place.

The protein localises to the nucleus. Essential component of the BHC complex, a corepressor complex that represses transcription of neuron-specific genes in non-neuronal cells. The BHC complex is recruited at RE1/NRSE sites by REST and acts by deacetylating and demethylating specific sites on histones, thereby acting as a chromatin modifier. In the BHC complex, it serves as a molecular beacon for the recruitment of molecular machinery that imposes silencing across a chromosomal interval. Plays a central role in demethylation of Lys-4 of histone H3 by promoting demethylase activity of KDM1A on core histones and nucleosomal substrates. The protein is REST corepressor 1 (rcor1) of Xenopus laevis (African clawed frog).